The sequence spans 187 residues: Large ribosomal subunit protein uL10 (187 aa).

It belongs to the universal ribosomal protein uL10 family. Part of the ribosomal stalk of the 50S ribosomal subunit. The N-terminus interacts with L11 and the large rRNA to form the base of the stalk. The C-terminus forms an elongated spine to which L12 dimers bind in a sequential fashion forming a multimeric L10(L12)X complex.

In terms of biological role, forms part of the ribosomal stalk, playing a central role in the interaction of the ribosome with GTP-bound translation factors. The sequence is that of Large ribosomal subunit protein uL10 from Roseiflexus castenholzii (strain DSM 13941 / HLO8).